A 249-amino-acid chain; its full sequence is 3-deoxy-D-manno-octulosonic acid kinase (249 aa).

D175 is an active-site residue.

The protein belongs to the protein kinase superfamily. KdkA/RfaP family.

Its subcellular location is the cell inner membrane. It carries out the reaction an alpha-Kdo-(2-&gt;6)-lipid IVA + ATP = a 4-O-phospho-alpha-Kdo-(2-&gt;6)-lipid IVA + ADP + H(+). It functions in the pathway bacterial outer membrane biogenesis; LPS core biosynthesis. Catalyzes the ATP-dependent phosphorylation of the 3-deoxy-D-manno-octulosonic acid (Kdo) residue in Kdo-lipid IV(A) at the 4-OH position. The chain is 3-deoxy-D-manno-octulosonic acid kinase from Xanthomonas campestris pv. campestris (strain 8004).